We begin with the raw amino-acid sequence, 139 residues long: Invertebrate-type lysozyme 2 (139 aa).

An N-terminal signal peptide occupies residues 1-18; sequence MFVKAILLLSIAVAYASA. An I-type lysozyme domain is found at 19–138; sequence DCLHCICMRE…WKGVHSCCGC (120 aa). 7 cysteine pairs are disulfide-bonded: Cys-20–Cys-106, Cys-23–Cys-138, Cys-25–Cys-31, Cys-36–Cys-45, Cys-58–Cys-86, Cys-76–Cys-82, and Cys-98–Cys-120. Glu-28 acts as the Proton donor in catalysis. Residue Asp-39 is the Nucleophile of the active site. 51-57 contributes to the substrate binding site; that stretch reads KIPYYED. Substrate-binding positions include Tyr-90 and 113-115; that span reads HNG.

The protein belongs to the glycosyl hydrolase 22 family. Type-I lysozyme subfamily. As to expression, expressed in pharyngeal muscle cell pm3, nerve ring and intestine.

The catalysed reaction is Hydrolysis of (1-&gt;4)-beta-linkages between N-acetylmuramic acid and N-acetyl-D-glucosamine residues in a peptidoglycan and between N-acetyl-D-glucosamine residues in chitodextrins.. Has bacteriolytic activity against Gram-positive bacteria. May play a role in resistance to Gram-positive bacterium S.aureus infection. This chain is Invertebrate-type lysozyme 2, found in Caenorhabditis elegans.